We begin with the raw amino-acid sequence, 525 residues long: Neuropilin and tolloid-like protein 2 (525 aa).

Positions 1 to 22 (MALEQLCAVLKVLLITVLVVEG) are cleaved as a signal peptide. The Extracellular segment spans residues 23-347 (IAVAQKTQDG…GLFEQITKTH (325 aa)). Cystine bridges form between Cys-45–Cys-72, Cys-100–Cys-122, Cys-177–Cys-207, Cys-234–Cys-256, Cys-297–Cys-309, Cys-304–Cys-322, and Cys-316–Cys-331. CUB domains are found at residues 45 to 159 (CGIW…YSFI) and 177 to 292 (CQFE…FTSF). The LDL-receptor class A domain maps to 296–332 (PCTSSTFFCHSNMCINNSLVCNGVQNCAYPWDENHCK). A glycan (N-linked (GlcNAc...) asparagine) is linked at Asn-311. The helical transmembrane segment at 348–368 (GTIIGITSGIVLVLLIISILV) threads the bilayer. Topologically, residues 369 to 525 (QVKQPRKKVM…SAQASISIDF (157 aa)) are cytoplasmic. The residue at position 409 (Ser-409) is a Phosphoserine.

In terms of assembly, interacts with GRIK2 and GRIK3, but neither with AMPA-nor with NMDA-sensitive glutamate receptors. N-glycosylated. As to expression, expressed in brain tissues, including cerebellar granule cells (at protein level).

The protein resides in the cell membrane. Its function is as follows. Accessory subunit of neuronal kainate-sensitive glutamate receptors, GRIK2 and GRIK3. Increases kainate-receptor channel activity, slowing the decay kinetics of the receptors, without affecting their expression at the cell surface, and increasing the open probability of the receptor channels. Modulates the agonist sensitivity of kainate receptors. Slows the decay of kainate receptor-mediated excitatory postsynaptic currents (EPSCs), thus directly influencing synaptic transmission. This chain is Neuropilin and tolloid-like protein 2 (Neto2), found in Mus musculus (Mouse).